Consider the following 288-residue polypeptide: Probable endonuclease 4 (288 aa).

His-75, His-115, Glu-153, Asp-187, His-190, His-224, Asp-237, His-239, and Glu-269 together coordinate Zn(2+).

The protein belongs to the AP endonuclease 2 family. Zn(2+) is required as a cofactor.

The catalysed reaction is Endonucleolytic cleavage to 5'-phosphooligonucleotide end-products.. Its function is as follows. Endonuclease IV plays a role in DNA repair. It cleaves phosphodiester bonds at apurinic or apyrimidinic (AP) sites, generating a 3'-hydroxyl group and a 5'-terminal sugar phosphate. The protein is Probable endonuclease 4 of Chlamydia trachomatis serovar A (strain ATCC VR-571B / DSM 19440 / HAR-13).